Here is a 341-residue protein sequence, read N- to C-terminus: NADH-quinone oxidoreductase subunit H 2 (341 aa).

A run of 8 helical transmembrane segments spans residues Ile-13–Ile-33, Gly-82–Ile-102, Val-115–Gly-135, Ile-161–Val-181, Val-190–Leu-210, Leu-242–Phe-262, Trp-277–Met-297, and Val-317–Gly-337.

Belongs to the complex I subunit 1 family. As to quaternary structure, NDH-1 is composed of 14 different subunits. Subunits NuoA, H, J, K, L, M, N constitute the membrane sector of the complex.

It localises to the cell inner membrane. It catalyses the reaction a quinone + NADH + 5 H(+)(in) = a quinol + NAD(+) + 4 H(+)(out). NDH-1 shuttles electrons from NADH, via FMN and iron-sulfur (Fe-S) centers, to quinones in the respiratory chain. The immediate electron acceptor for the enzyme in this species is believed to be ubiquinone. Couples the redox reaction to proton translocation (for every two electrons transferred, four hydrogen ions are translocated across the cytoplasmic membrane), and thus conserves the redox energy in a proton gradient. This subunit may bind ubiquinone. The protein is NADH-quinone oxidoreductase subunit H 2 of Rhodopseudomonas palustris (strain HaA2).